Reading from the N-terminus, the 20-residue chain is Equinatoxin-1'' (20 aa).

Residues 3–12 (AVAGAVIEGA) are plays an important role in the hemolytic activity. An N-terminal region region spans residues 11-20 (GATLTFNVLQ).

The protein belongs to the actinoporin family. Sea anemone subfamily. In terms of assembly, octamer or nonamer in membranes. Monomer in the soluble state.

The protein resides in the secreted. Its subcellular location is the nematocyst. It localises to the target cell membrane. Its function is as follows. Pore-forming protein that forms cations-selective hydrophilic pores of around 1 nm and causes cardiac stimulation and cytolysis. Pore formation is a multi-step process that involves specific recognition of membrane sphingomyelin (but neither cholesterol nor phosphatidylcholine) using aromatic rich region and adjacent phosphocholine (POC) binding site, firm binding to the membrane (mainly driven by hydrophobic interactions) accompanied by the transfer of the N-terminal region to the lipid-water interface and finally pore formation after oligomerization of monomers. Cytolytic effects include red blood cells hemolysis, platelet aggregation and lysis, cytotoxic and cytostatic effects on fibroblasts. Lethality in mammals has been ascribed to severe vasospasm of coronary vessels, cardiac arrhythmia, and inotropic effects. This chain is Equinatoxin-1'', found in Actinia equina (Beadlet anemone).